We begin with the raw amino-acid sequence, 401 residues long: Probable peptidoglycan glycosyltransferase FtsW (401 aa).

The Cytoplasmic segment spans residues 1-26; sequence MAEVLRWLRLDLGQSGGLAWERLDWR. A helical membrane pass occupies residues 27–47; it reads LALTVLALAGLGLVMVGSASV. Over 48–65 the chain is Periplasmic; sequence SIAEGATGDPLHYLYRQA. A helical transmembrane segment spans residues 66–86; sequence VFLAVALMAAVACLHLSLDQF. The Cytoplasmic segment spans residues 87–88; sequence YR. Residues 89-109 form a helical membrane-spanning segment; that stretch reads GGPVLLVLGFFLLLVVLIPGV. Residues 110-118 are Periplasmic-facing; that stretch reads GREVNGATR. A helical membrane pass occupies residues 119 to 139; the sequence is WIPLGLINLQVAEVARVCFII. Over 140–154 the chain is Cytoplasmic; that stretch reads YLAGYCVRRHAELPN. A helical membrane pass occupies residues 155–175; sequence TSSAFAVPLAVFSLAAVLLLA. At 176-180 the chain is on the periplasmic side; that stretch reads QPDFG. Residues 181 to 201 form a helical membrane-spanning segment; sequence TALVLMATALGLLFLAGASLW. Position 202 (arginine 202) is a topological domain, cytoplasmic. A helical transmembrane segment spans residues 203–223; it reads IGVLGLLLAGAAWLLIVGSPY. The Periplasmic segment spans residues 224–278; sequence RWQRLTTFTDPWADPFNAGFQLTQSLIAIGRGEWFGVGLGASVQKLFYLPEAHTD. A helical membrane pass occupies residues 279–299; the sequence is FLFAVLAEELGLLGVVVVVAL. Topologically, residues 300–322 are cytoplasmic; sequence FTYLAWRGMQIGLASLRADRPFG. The chain crosses the membrane as a helical span at residues 323–343; sequence AYLAWGLTISIGLQAFINMAV. Over 344–354 the chain is Periplasmic; the sequence is TMGLLPTKGLT. Residues 355-375 form a helical membrane-spanning segment; the sequence is LPLMSYGGSSLIMTGIALALL. The Cytoplasmic portion of the chain corresponds to 376–401; the sequence is LRVDYEARLAAQQPRPRKRPSGRVRP.

Belongs to the SEDS family. FtsW subfamily.

It localises to the cell inner membrane. It carries out the reaction [GlcNAc-(1-&gt;4)-Mur2Ac(oyl-L-Ala-gamma-D-Glu-L-Lys-D-Ala-D-Ala)](n)-di-trans,octa-cis-undecaprenyl diphosphate + beta-D-GlcNAc-(1-&gt;4)-Mur2Ac(oyl-L-Ala-gamma-D-Glu-L-Lys-D-Ala-D-Ala)-di-trans,octa-cis-undecaprenyl diphosphate = [GlcNAc-(1-&gt;4)-Mur2Ac(oyl-L-Ala-gamma-D-Glu-L-Lys-D-Ala-D-Ala)](n+1)-di-trans,octa-cis-undecaprenyl diphosphate + di-trans,octa-cis-undecaprenyl diphosphate + H(+). It functions in the pathway cell wall biogenesis; peptidoglycan biosynthesis. Its function is as follows. Peptidoglycan polymerase that is essential for cell division. The polypeptide is Probable peptidoglycan glycosyltransferase FtsW (Alkalilimnicola ehrlichii (strain ATCC BAA-1101 / DSM 17681 / MLHE-1)).